The following is a 144-amino-acid chain: Transcriptional regulator MraZ (144 aa).

2 SpoVT-AbrB domains span residues 5–47 (TYTP…PRAE) and 77–120 (TDEQ…DAQA).

This sequence belongs to the MraZ family. In terms of assembly, forms oligomers.

Its subcellular location is the cytoplasm. It localises to the nucleoid. In Mycolicibacterium gilvum (strain PYR-GCK) (Mycobacterium gilvum (strain PYR-GCK)), this protein is Transcriptional regulator MraZ.